The chain runs to 287 residues: 4-diphosphocytidyl-2-C-methyl-D-erythritol kinase (287 aa).

Residue lysine 12 is part of the active site. 95-105 (PAQAGMGGGSS) lines the ATP pocket. The active site involves aspartate 137.

It belongs to the GHMP kinase family. IspE subfamily.

The catalysed reaction is 4-CDP-2-C-methyl-D-erythritol + ATP = 4-CDP-2-C-methyl-D-erythritol 2-phosphate + ADP + H(+). The protein operates within isoprenoid biosynthesis; isopentenyl diphosphate biosynthesis via DXP pathway; isopentenyl diphosphate from 1-deoxy-D-xylulose 5-phosphate: step 3/6. In terms of biological role, catalyzes the phosphorylation of the position 2 hydroxy group of 4-diphosphocytidyl-2C-methyl-D-erythritol. This chain is 4-diphosphocytidyl-2-C-methyl-D-erythritol kinase, found in Delftia acidovorans (strain DSM 14801 / SPH-1).